We begin with the raw amino-acid sequence, 175 residues long: Transcriptional repressor NrdR (175 aa).

A zinc finger lies at Cys3–Cys32. In terms of domain architecture, ATP-cone spans Leu47–Gln137.

The protein belongs to the NrdR family. Zn(2+) is required as a cofactor.

Its function is as follows. Negatively regulates transcription of bacterial ribonucleotide reductase nrd genes and operons by binding to NrdR-boxes. The sequence is that of Transcriptional repressor NrdR from Dehalococcoides mccartyi (strain CBDB1).